A 259-amino-acid polypeptide reads, in one-letter code: Phosphatidylserine decarboxylase proenzyme (259 aa).

The active-site Schiff-base intermediate with substrate; via pyruvic acid is the Ser-183. Position 183 is a pyruvic acid (Ser); by autocatalysis (Ser-183).

Belongs to the phosphatidylserine decarboxylase family. PSD-A subfamily. As to quaternary structure, heterodimer of a large membrane-associated beta subunit and a small pyruvoyl-containing alpha subunit. Pyruvate serves as cofactor. Is synthesized initially as an inactive proenzyme. Formation of the active enzyme involves a self-maturation process in which the active site pyruvoyl group is generated from an internal serine residue via an autocatalytic post-translational modification. Two non-identical subunits are generated from the proenzyme in this reaction, and the pyruvate is formed at the N-terminus of the alpha chain, which is derived from the carboxyl end of the proenzyme. The post-translation cleavage follows an unusual pathway, termed non-hydrolytic serinolysis, in which the side chain hydroxyl group of the serine supplies its oxygen atom to form the C-terminus of the beta chain, while the remainder of the serine residue undergoes an oxidative deamination to produce ammonia and the pyruvoyl prosthetic group on the alpha chain.

The protein resides in the cell membrane. It catalyses the reaction a 1,2-diacyl-sn-glycero-3-phospho-L-serine + H(+) = a 1,2-diacyl-sn-glycero-3-phosphoethanolamine + CO2. Its pathway is phospholipid metabolism; phosphatidylethanolamine biosynthesis; phosphatidylethanolamine from CDP-diacylglycerol: step 2/2. Catalyzes the formation of phosphatidylethanolamine (PtdEtn) from phosphatidylserine (PtdSer). This is Phosphatidylserine decarboxylase proenzyme from Neisseria gonorrhoeae (strain ATCC 700825 / FA 1090).